The chain runs to 270 residues: MTLKIAIAGAGGRMGRQLIQAVHSAEGVELGAAFERKGSSLVGTDAGELAGIGHLGVAVSDDLESQKDKFDLLIDFTRPEGSLEHIAFCVANNKKMVIGTTGFDQNGKAAIKAASDKIAIVFASNFSVGVNLVFKLLEKAAKVMGDYCDIEVIEAHHRHKVDAPSGTALSMGEHIAKTLGRDLKTHGVFCREGITGERKRDEIGFSTIRASDVVGEHMVWFADIGERVEISHKASSRMTFANGAVRAGKWLENKANGLFDMTDVLDLNNL.

NAD(+) contacts are provided by residues 9–14 (GAGGRM) and E35. R36 provides a ligand contact to NADP(+). NAD(+) contacts are provided by residues 99-101 (GTT) and 123-126 (ASNF). H156 functions as the Proton donor/acceptor in the catalytic mechanism. H157 contributes to the (S)-2,3,4,5-tetrahydrodipicolinate binding site. K160 serves as the catalytic Proton donor. (S)-2,3,4,5-tetrahydrodipicolinate is bound at residue 166–167 (GT).

It belongs to the DapB family.

It localises to the cytoplasm. It carries out the reaction (S)-2,3,4,5-tetrahydrodipicolinate + NAD(+) + H2O = (2S,4S)-4-hydroxy-2,3,4,5-tetrahydrodipicolinate + NADH + H(+). The enzyme catalyses (S)-2,3,4,5-tetrahydrodipicolinate + NADP(+) + H2O = (2S,4S)-4-hydroxy-2,3,4,5-tetrahydrodipicolinate + NADPH + H(+). Its pathway is amino-acid biosynthesis; L-lysine biosynthesis via DAP pathway; (S)-tetrahydrodipicolinate from L-aspartate: step 4/4. Catalyzes the conversion of 4-hydroxy-tetrahydrodipicolinate (HTPA) to tetrahydrodipicolinate. This chain is 4-hydroxy-tetrahydrodipicolinate reductase, found in Haemophilus influenzae (strain PittEE).